The sequence spans 305 residues: MSAREKPSSGLVGAGLLIVDKDAGVTSHDVVARCRKLLGTRKVGHAGTLDPMATGVLVLGVERATKLLGFLALTTKAYTATIRLGQATTTDDAEGEVVASADASGVTDEEIAAQVHTLTGDIQQIPSSVSAIKVDGRRAHALIRAGEEFELAPRSVTVSRFEVVARRTEGAFVDVDVEVECSSGTYVRALARDLGIALIGVGGHLTSLRRTRVGPFTLEHARTLEQLAEEPGVSLDIDAAAQTAFPHRQVDADEAESISQGRWLEPIGIKGVYAAIDPSGHTIALLQERGRRASSVMVVRPATLR.

The Nucleophile role is filled by D50.

This sequence belongs to the pseudouridine synthase TruB family. Type 1 subfamily.

The enzyme catalyses uridine(55) in tRNA = pseudouridine(55) in tRNA. Responsible for synthesis of pseudouridine from uracil-55 in the psi GC loop of transfer RNAs. The chain is tRNA pseudouridine synthase B from Rhodococcus jostii (strain RHA1).